Reading from the N-terminus, the 308-residue chain is Tetraacyldisaccharide 4'-kinase (308 aa).

Residue 63–70 (SFGGNGKT) participates in ATP binding.

Belongs to the LpxK family.

It carries out the reaction a lipid A disaccharide + ATP = a lipid IVA + ADP + H(+). It participates in glycolipid biosynthesis; lipid IV(A) biosynthesis; lipid IV(A) from (3R)-3-hydroxytetradecanoyl-[acyl-carrier-protein] and UDP-N-acetyl-alpha-D-glucosamine: step 6/6. Its function is as follows. Transfers the gamma-phosphate of ATP to the 4'-position of a tetraacyldisaccharide 1-phosphate intermediate (termed DS-1-P) to form tetraacyldisaccharide 1,4'-bis-phosphate (lipid IVA). The polypeptide is Tetraacyldisaccharide 4'-kinase (Campylobacter jejuni subsp. doylei (strain ATCC BAA-1458 / RM4099 / 269.97)).